Reading from the N-terminus, the 320-residue chain is GPI-specific phospholipase A2-like PGAP3 (320 aa).

A signal peptide spans 1 to 20 (MAERTARLLLLTVTVGLAWG). The Lumenal portion of the chain corresponds to 21-98 (SQGDREPVYR…QFHGKWPFSR (78 aa)). N-linked (GlcNAc...) asparagine glycosylation is present at N40. A helical membrane pass occupies residues 99 to 119 (FLFIQEPASAVASLLNGLASL). The Cytoplasmic portion of the chain corresponds to 120 to 135 (VMLCRYRASVPASSPM). A helical membrane pass occupies residues 136–156 (YHTCMAFAWVSLNAWFWSTVF). The Lumenal segment spans residues 157-169 (HTRDTDLTEKMDY). The chain crosses the membrane as a helical span at residues 170–190 (FCASAVILHSIYLCCVRTVGL). Topologically, residues 191 to 198 (QHPSVARA) are cytoplasmic. The helical transmembrane segment at 199–219 (FGATLLLMLLLHTSYLSLVRF) threads the bilayer. Over 220–223 (DYSY) the chain is Lumenal. A helical transmembrane segment spans residues 224 to 244 (NMMANVAIGLVNLAWWLAWCL). Residues 245 to 258 (RNHRRLPHTRKCVA) are Cytoplasmic-facing. Residues 259-279 (VVLLLQGLSLLELLDFPPLFW) traverse the membrane as a helical segment. Over 280 to 282 (VLD) the chain is Lumenal. Residues 283-303 (AHAIWHISTIPVHVLFFRFLE) traverse the membrane as a helical segment. The Cytoplasmic portion of the chain corresponds to 304-320 (DDSLYLLKESEAKFKLD).

It belongs to the PGAP3 family.

The protein localises to the golgi apparatus membrane. Functionally, involved in the fatty acid remodeling steps of GPI-anchor maturation where the unsaturated acyl chain at sn-2 of inositol phosphate is replaced by a saturated stearoyl chain. May catalyze the first step of the fatty acid remodeling, by removing the unsaturated acyl chain at sn-2 of inositol phosphate, generating a lyso-GPI intermediate. The fatty acid remodeling steps is critical for the integration of GPI-APs into lipid rafts. The polypeptide is GPI-specific phospholipase A2-like PGAP3 (PGAP3) (Cricetulus griseus (Chinese hamster)).